The sequence spans 577 residues: Arginine--tRNA ligase (577 aa).

The 'HIGH' region signature appears at 122-132 (PNVAKEMHVGH).

This sequence belongs to the class-I aminoacyl-tRNA synthetase family. As to quaternary structure, monomer.

It localises to the cytoplasm. The catalysed reaction is tRNA(Arg) + L-arginine + ATP = L-arginyl-tRNA(Arg) + AMP + diphosphate. The chain is Arginine--tRNA ligase from Histophilus somni (strain 2336) (Haemophilus somnus).